The following is a 136-amino-acid chain: Large-conductance mechanosensitive channel (136 aa).

Transmembrane regions (helical) follow at residues 10–30 (FAMR…AAFG) and 76–96 (GVFI…FMAI).

This sequence belongs to the MscL family. In terms of assembly, homopentamer.

It localises to the cell inner membrane. Channel that opens in response to stretch forces in the membrane lipid bilayer. May participate in the regulation of osmotic pressure changes within the cell. This chain is Large-conductance mechanosensitive channel, found in Escherichia coli O127:H6 (strain E2348/69 / EPEC).